The following is a 389-amino-acid chain: Protein CysO (389 aa).

Lys127 bears the N6-(pyridoxal phosphate)lysine mark. Residues Asn155, 261-265 (GTSGH), and Ser341 contribute to the pyridoxal 5'-phosphate site.

Belongs to the cysteine synthase/cystathionine beta-synthase family. Homodimer. It depends on pyridoxal 5'-phosphate as a cofactor.

It catalyses the reaction O-acetyl-L-serine + hydrogen sulfide = L-cysteine + acetate. The catalysed reaction is O-phospho-L-serine + hydrogen sulfide + H(+) = L-cysteine + phosphate. The enzyme catalyses L-homocysteine + L-serine = L,L-cystathionine + H2O. It participates in amino-acid biosynthesis; L-cysteine biosynthesis; L-cysteine from L-serine: step 2/2. Functionally, cysteine synthase that can also catalyze the synthesis of S-sulfo-L-cysteine from thiosulfate and O(3)-acetyl-L-serine, as well as the sulfhydrylation of L-serine by sulfide. The chain is Protein CysO (cysO) from Aeropyrum pernix (strain ATCC 700893 / DSM 11879 / JCM 9820 / NBRC 100138 / K1).